A 348-amino-acid polypeptide reads, in one-letter code: LRP2-binding protein (348 aa).

The TPR repeat unit spans residues 60 to 93 (TLAYFLRGQLYFEEGWYEEALEQFEEIEEKDHQA). Sel1-like repeat units lie at residues 94-126 (TYQL…DSPC), 134-169 (FAAA…DNGN), 174-207 (VKAQ…GNGN), 208-243 (LESQ…ERGN), 244-278 (VYAQ…EVHD), and 298-333 (AMAS…RLNP).

As to quaternary structure, interacts with LRP2.

It is found in the cytoplasm. Functionally, may act as an adapter that regulates LRP2 function. This is LRP2-binding protein (LRP2BP) from Macaca fascicularis (Crab-eating macaque).